The chain runs to 206 residues: Transcription factor MYB57 (206 aa).

Residues 1 to 11 (METTMKKKGRV) are compositionally biased toward basic residues. Residues 1–20 (METTMKKKGRVKATITSQKE) are disordered. 2 HTH myb-type domains span residues 22-74 (EGTV…LNYL) and 75-129 (RPDV…QRHM). DNA-binding regions (H-T-H motif) lie at residues 50–74 (WNSV…LNYL) and 102–125 (WSKI…RTKI). The tract at residues 138-162 (NHQHHCSGNSQSSGMTTQGSSGKAI) is disordered. Over residues 144–159 (SGNSQSSGMTTQGSSG) the composition is skewed to low complexity.

In terms of tissue distribution, expressed specifically in flowers.

It is found in the nucleus. In terms of biological role, transcription factor acting redundantly with MYB21 and MYB24 to control stamen filament elongation in the late developed flowers. Repressed at the transcript levels by DELLA proteins. The protein is Transcription factor MYB57 (MYB57) of Arabidopsis thaliana (Mouse-ear cress).